A 269-amino-acid chain; its full sequence is MTNLIRSNFQDHPFHLVSPSPWPLNTSVCLLNLTTTGALSMHNFNNIHYLYYIALIGLVSAMFLWFRDIISEGTFLGDHTLAVQRGLNLGIILFIVSEALFFLAIFWAFFHSALTPTVELGAQWPPIGIEPVNPFELPLLNTVILLSSGATITYAHHALIKGEREGALYGSIATILLAIIFTGFQGVEYSVSSFTISDGAFGTCFFFSTGFHGIHVIIGTIFLAVALWRIFAYHLTDNHHVGFEGGILYWHFVDVVWLFLYISVYYWGS.

Topologically, residues 1 to 22 are mitochondrial matrix; sequence MTNLIRSNFQDHPFHLVSPSPW. A helical transmembrane segment spans residues 23-41; sequence PLNTSVCLLNLTTTGALSM. Residues 42 to 48 are Mitochondrial intermembrane-facing; that stretch reads HNFNNIH. Residues 49 to 73 traverse the membrane as a helical segment; that stretch reads YLYYIALIGLVSAMFLWFRDIISEG. Over 74 to 80 the chain is Mitochondrial matrix; it reads TFLGDHT. Residues 81–114 traverse the membrane as a helical segment; sequence LAVQRGLNLGIILFIVSEALFFLAIFWAFFHSAL. Over 115–137 the chain is Mitochondrial intermembrane; it reads TPTVELGAQWPPIGIEPVNPFEL. A helical transmembrane segment spans residues 138–161; sequence PLLNTVILLSSGATITYAHHALIK. The Mitochondrial matrix portion of the chain corresponds to 162 to 164; that stretch reads GER. Residues 165–188 form a helical membrane-spanning segment; that stretch reads EGALYGSIATILLAIIFTGFQGVE. Over 189–201 the chain is Mitochondrial intermembrane; sequence YSVSSFTISDGAF. The chain crosses the membrane as a helical span at residues 202–230; that stretch reads GTCFFFSTGFHGIHVIIGTIFLAVALWRI. The Mitochondrial matrix segment spans residues 231-248; that stretch reads FAYHLTDNHHVGFEGGIL. The chain crosses the membrane as a helical span at residues 249 to 265; the sequence is YWHFVDVVWLFLYISVY. The Mitochondrial intermembrane portion of the chain corresponds to 266–269; sequence YWGS.

The protein belongs to the cytochrome c oxidase subunit 3 family. Component of the cytochrome c oxidase (complex IV, CIV), a multisubunit enzyme composed of 11 subunits. The complex is composed of a catalytic core of 3 subunits Cox1, Cox2 and Cox3, encoded in the mitochondrial DNA, and 8 supernumerary subunits Cox4, Cox5a/Cox5, Cox6, Cox7, Cox8, Cox7a/Cox9, Cox6b/Cox12 and Cox6a/Cox13, which are encoded in the nuclear genome. The complex exists as a monomer or a dimer and forms respiratory supercomplexes (SCs) in the inner mitochondrial membrane with NADH-ubiquinone oxidoreductase (complex I, CI) and ubiquinol-cytochrome c oxidoreductase (cytochrome b-c1 complex, complex III, CIII), resulting in various different assemblies (supercomplexes I(1)IV(1), I(1)III(3)IV(2), III(2)IV(1) and III(2)IV(2) as well as larger supercomplexes of compositions like I(1)III(2)IV(5-6)).

The protein localises to the mitochondrion inner membrane. The catalysed reaction is 4 Fe(II)-[cytochrome c] + O2 + 8 H(+)(in) = 4 Fe(III)-[cytochrome c] + 2 H2O + 4 H(+)(out). Its function is as follows. Component of the cytochrome c oxidase, the last enzyme in the mitochondrial electron transport chain which drives oxidative phosphorylation. The respiratory chain contains 3 multisubunit complexes succinate dehydrogenase (complex II, CII), ubiquinol-cytochrome c oxidoreductase (cytochrome b-c1 complex, complex III, CIII) and cytochrome c oxidase (complex IV, CIV), that cooperate to transfer electrons derived from NADH and succinate to molecular oxygen, creating an electrochemical gradient over the inner membrane that drives transmembrane transport and the ATP synthase. Cytochrome c oxidase is the component of the respiratory chain that catalyzes the reduction of oxygen to water. Electrons originating from reduced cytochrome c in the intermembrane space (IMS) are transferred via the dinuclear copper A center (CU(A)) of Cox2 and heme A of Cox1 to the active site in Cox1, a binuclear center (BNC) formed by heme A3 and copper B (CU(B)). The BNC reduces molecular oxygen to 2 water molecules using 4 electrons from cytochrome c in the IMS and 4 protons from the mitochondrial matrix. This Neurospora crassa (strain ATCC 24698 / 74-OR23-1A / CBS 708.71 / DSM 1257 / FGSC 987) protein is Cytochrome c oxidase subunit 3 (cox-3).